Here is a 269-residue protein sequence, read N- to C-terminus: MKI67 FHA domain-interacting nucleolar phosphoprotein (269 aa).

An RRM domain is found at 45-123 (GVLYVGHLPR…RIIKCHVIPP (79 aa)). Positions 234–269 (DEIVIKVKPLPENSDDVEESEEESAEEDEGEEEEAA) are disordered. The span at 246–269 (NSDDVEESEEESAEEDEGEEEEAA) shows a compositional bias: acidic residues.

It localises to the nucleus. The protein resides in the nucleolus. Plays an essential role in early embryonic development. The sequence is that of MKI67 FHA domain-interacting nucleolar phosphoprotein (nifk) from Danio rerio (Zebrafish).